The following is a 164-amino-acid chain: Phosphopantetheine adenylyltransferase (164 aa).

Residue serine 10 coordinates substrate. ATP contacts are provided by residues serine 10–phenylalanine 11 and histidine 18. 3 residues coordinate substrate: lysine 42, leucine 74, and arginine 88. ATP is bound by residues glycine 89 to arginine 91, glutamate 99, and tyrosine 124 to serine 130.

Belongs to the bacterial CoaD family. As to quaternary structure, homohexamer. Mg(2+) is required as a cofactor.

It localises to the cytoplasm. The catalysed reaction is (R)-4'-phosphopantetheine + ATP + H(+) = 3'-dephospho-CoA + diphosphate. It functions in the pathway cofactor biosynthesis; coenzyme A biosynthesis; CoA from (R)-pantothenate: step 4/5. Functionally, reversibly transfers an adenylyl group from ATP to 4'-phosphopantetheine, yielding dephospho-CoA (dPCoA) and pyrophosphate. The sequence is that of Phosphopantetheine adenylyltransferase from Exiguobacterium sibiricum (strain DSM 17290 / CCUG 55495 / CIP 109462 / JCM 13490 / 255-15).